Here is a 96-residue protein sequence, read N- to C-terminus: Co-chaperonin GroES (96 aa).

The protein belongs to the GroES chaperonin family. In terms of assembly, heptamer of 7 subunits arranged in a ring. Interacts with the chaperonin GroEL.

It is found in the cytoplasm. Together with the chaperonin GroEL, plays an essential role in assisting protein folding. The GroEL-GroES system forms a nano-cage that allows encapsulation of the non-native substrate proteins and provides a physical environment optimized to promote and accelerate protein folding. GroES binds to the apical surface of the GroEL ring, thereby capping the opening of the GroEL channel. In Wolbachia sp. subsp. Drosophila simulans (strain wRi), this protein is Co-chaperonin GroES.